Consider the following 457-residue polypeptide: Multidrug resistance protein MdtK (457 aa).

Over 1-10 (MQKYISEARL) the chain is Cytoplasmic. Residues 11–31 (LLALAIPVILAQIAQTAMGFV) traverse the membrane as a helical segment. Over 32–52 (DTVMAGGYSATDMAAVAIGTS) the chain is Periplasmic. The helical transmembrane segment at 53-73 (IWLPAILFGHGLLLALTPVIA) threads the bilayer. Topologically, residues 74–92 (QLNGSGRRERIAHQVRQGF) are cytoplasmic. A helical membrane pass occupies residues 93–113 (WLAGFVSVLIMLVLWNAGYII). Residues 114 to 126 (RYMENIDPALADK) are Periplasmic-facing. A helical membrane pass occupies residues 127 to 147 (AVGYLRALLWGAPGYLFFQVA). Over 148–159 (RNQCEGLAKAKP) the chain is Cytoplasmic. Residues 160-180 (GMVMGFIGLLVNIPVNYIFIY) form a helical membrane-spanning segment. The Periplasmic segment spans residues 181-188 (GHFGMPEL). A helical membrane pass occupies residues 189–209 (GGVGCGVATAAVYWVMFLAMV). Over 210–242 (SYIKRARSMRDIRNEKGTAKPEPAVMKRLIQLG) the chain is Cytoplasmic. The chain crosses the membrane as a helical span at residues 243–263 (LPIALALFLEVTLFAVVALLV). Residues 264–275 (SPLGIVDVAGHQ) are Periplasmic-facing. A helical transmembrane segment spans residues 276-296 (IALNFSSLMFVLPMSLAAAVT). Topologically, residues 297–313 (IRVGYRLGQGSTLDAQT) are cytoplasmic. Residues 314-334 (AARTGLMVGVCMATLTAIFTV) traverse the membrane as a helical segment. Topologically, residues 335-349 (SLREQIALLYNDNPE) are periplasmic. Residues 350–370 (VVTLAAHLMLLAAVYQISDSI) form a helical membrane-spanning segment. At 371–386 (QVIGSGILRGYKDTRS) the chain is on the cytoplasmic side. Residues 387 to 407 (IFYITFTAYWVLGLPSGYILA) traverse the membrane as a helical segment. Residues 408 to 417 (LTDLVVEPMG) are Periplasmic-facing. Residues 418-438 (PAGFWIGFIIGLTSAAIMMML) traverse the membrane as a helical segment. Topologically, residues 439-457 (RMRFLQRMPSAIILQRASR) are cytoplasmic.

This sequence belongs to the multi antimicrobial extrusion (MATE) (TC 2.A.66.1) family. MdtK subfamily.

Its subcellular location is the cell inner membrane. In terms of biological role, multidrug efflux pump that functions probably as a Na(+)/drug antiporter. The protein is Multidrug resistance protein MdtK of Shigella flexneri serotype 5b (strain 8401).